Here is a 438-residue protein sequence, read N- to C-terminus: MKSWSSRPVPELPGTGTAPRVHDTSTGQLEPLAARDGRASLYVCGITPYDATHMGHAATYVAFDLLHRLWRDAGWSVDYVQNVTDVDDPLLERADATGVDWRELAESQTELFRTDMSALNVLAPQHYVGATEVVDRIVPAVERLLERGLAYRAPAGTGQGGEPAPAGDVYFDVDAAGALRAEDPDAWVVGSTCRLAGERDRMMPLFADHGGDPDRTGKRDPMDPLLWRAHRAGEPSWDGASLGPGRPGWHIECSVIALDLLPRPFTVQGGGSDLAFPHHDMGAGHAYALSGQPMAEHYVHTAMVGLDGEKMSKSRGNLVLVSTLRAQGMDPAVIRLAILANHYRTDWFWTDELLEQARRRLGTWREAAAKQETAGADAMLEAVRAALGEDLNSPAALIAVDAWAARNLGGAAARGSGASSQDTRLARDTVEALLGVVL.

The tract at residues 1–27 (MKSWSSRPVPELPGTGTAPRVHDTSTG) is disordered. Zn(2+) is bound at residue Cys-44. L-cysteinyl-5'-AMP contacts are provided by residues 44-47 (CGIT), Thr-59, and 82-84 (NVT). The 'HIGH' region motif lies at 46–56 (ITPYDATHMGH). The short motif at 208-213 (DHGGDP) is the 'ERGGDP' region element. Trp-249 provides a ligand contact to L-cysteinyl-5'-AMP. Cys-253 contacts Zn(2+). L-cysteinyl-5'-AMP is bound at residue 271 to 273 (GSD). His-278 contributes to the Zn(2+) binding site. Val-304 provides a ligand contact to L-cysteinyl-5'-AMP. A 'KMSKS' region motif is present at residues 310–314 (KMSKS).

The protein belongs to the class-I aminoacyl-tRNA synthetase family. MshC subfamily. As to quaternary structure, monomer. It depends on Zn(2+) as a cofactor.

The enzyme catalyses 1D-myo-inositol 2-amino-2-deoxy-alpha-D-glucopyranoside + L-cysteine + ATP = 1D-myo-inositol 2-(L-cysteinylamino)-2-deoxy-alpha-D-glucopyranoside + AMP + diphosphate + H(+). Its function is as follows. Catalyzes the ATP-dependent condensation of GlcN-Ins and L-cysteine to form L-Cys-GlcN-Ins. In Kocuria rhizophila (strain ATCC 9341 / DSM 348 / NBRC 103217 / DC2201), this protein is L-cysteine:1D-myo-inositol 2-amino-2-deoxy-alpha-D-glucopyranoside ligase.